A 451-amino-acid polypeptide reads, in one-letter code: Phenylalanine--tRNA ligase, mitochondrial (451 aa).

Substrate-binding positions include 157–160 (SAHQ), Arg-179, 186–188 (QHY), and 193–195 (QLE). Lys-202 carries the N6-acetyllysine modification. The substrate site is built by Glu-287 and Phe-312. The region spanning 358–450 (SKYPAVFNDI…AVQLLGVEGR (93 aa)) is the FDX-ACB domain.

The protein belongs to the class-II aminoacyl-tRNA synthetase family. As to quaternary structure, monomer.

The protein localises to the mitochondrion matrix. Its subcellular location is the mitochondrion. The enzyme catalyses tRNA(Phe) + L-phenylalanine + ATP = L-phenylalanyl-tRNA(Phe) + AMP + diphosphate + H(+). Its function is as follows. Is responsible for the charging of tRNA(Phe) with phenylalanine in mitochondrial translation. To a lesser extent, also catalyzes direct attachment of m-Tyr (an oxidized version of Phe) to tRNA(Phe), thereby opening the way for delivery of the misacylated tRNA to the ribosome and incorporation of ROS-damaged amino acid into proteins. The protein is Phenylalanine--tRNA ligase, mitochondrial (Fars2) of Mus musculus (Mouse).